A 338-amino-acid chain; its full sequence is tRNA N6-adenosine threonylcarbamoyltransferase (338 aa).

Fe cation is bound by residues H109 and H113. Residues 132 to 136 (AISGA), D165, G178, and N277 contribute to the substrate site. D302 contacts Fe cation.

This sequence belongs to the KAE1 / TsaD family. It depends on Fe(2+) as a cofactor.

Its subcellular location is the cytoplasm. It catalyses the reaction L-threonylcarbamoyladenylate + adenosine(37) in tRNA = N(6)-L-threonylcarbamoyladenosine(37) in tRNA + AMP + H(+). In terms of biological role, required for the formation of a threonylcarbamoyl group on adenosine at position 37 (t(6)A37) in tRNAs that read codons beginning with adenine. Is involved in the transfer of the threonylcarbamoyl moiety of threonylcarbamoyl-AMP (TC-AMP) to the N6 group of A37, together with TsaE and TsaB. TsaD likely plays a direct catalytic role in this reaction. The polypeptide is tRNA N6-adenosine threonylcarbamoyltransferase (Chlamydia trachomatis serovar L2b (strain UCH-1/proctitis)).